Consider the following 213-residue polypeptide: Thymidylate kinase (213 aa).

Residue 11–18 (GGEGAGKT) participates in ATP binding.

It belongs to the thymidylate kinase family.

It carries out the reaction dTMP + ATP = dTDP + ADP. Its function is as follows. Phosphorylation of dTMP to form dTDP in both de novo and salvage pathways of dTTP synthesis. This chain is Thymidylate kinase, found in Shouchella clausii (strain KSM-K16) (Alkalihalobacillus clausii).